Here is a 464-residue protein sequence, read N- to C-terminus: ESX-1 secretion system protein EccE1 (464 aa).

A run of 2 helical transmembrane segments spans residues 11–31 (FTTG…AICM) and 34–54 (DLLW…VLTI).

It belongs to the EccE family. Part of the ESX-1 / type VII secretion system (T7SS), which is composed of cytosolic and membrane components. The ESX-1 membrane complex is composed of EccB1, EccCa1, EccCb1, EccD1 and EccE1.

The protein resides in the cell inner membrane. Functionally, part of the ESX-1 / type VII specialized secretion system (T7SS), which exports several proteins including EsxA and EsxB. Plays a role in DNA conjugation, in at least a donor strain. The protein is ESX-1 secretion system protein EccE1 of Mycolicibacterium smegmatis (strain ATCC 700084 / mc(2)155) (Mycobacterium smegmatis).